The primary structure comprises 532 residues: Tegument protein UL21 (532 aa).

Positions 251-276 are disordered; that stretch reads SPSVSSAPPPSAPDASLPPPGLQEAA. Over residues 257–276 the composition is skewed to pro residues; the sequence is APPPSAPDASLPPPGLQEAA.

The protein belongs to the alphaherpesvirinae UL21 protein family. Interacts (via C-terminus) with UL16.

The protein localises to the virion tegument. The protein resides in the host cytoplasm. It localises to the host nucleus. May participate in DNA packaging/capsid maturation events. Promotes efficient incorporation of tegument proteins UL46, UL49, and US3 into virions. May also play a role in capsid transport to the trans-Golgi network (TGN). The protein is Tegument protein UL21 of Human herpesvirus 2 (strain HG52) (HHV-2).